The chain runs to 637 residues: tRNA uridine 5-carboxymethylaminomethyl modification enzyme MnmG (637 aa).

FAD contacts are provided by residues 15–20, Ile-127, and Ser-182; that span reads GAGHAG. NAD(+) is bound at residue 276–290; that stretch reads GPRYCPSIEDKIVRF. Gln-373 serves as a coordination point for FAD.

It belongs to the MnmG family. In terms of assembly, homodimer. Heterotetramer of two MnmE and two MnmG subunits. FAD serves as cofactor.

It is found in the cytoplasm. In terms of biological role, NAD-binding protein involved in the addition of a carboxymethylaminomethyl (cmnm) group at the wobble position (U34) of certain tRNAs, forming tRNA-cmnm(5)s(2)U34. The protein is tRNA uridine 5-carboxymethylaminomethyl modification enzyme MnmG of Streptococcus pneumoniae (strain Hungary19A-6).